The following is a 114-amino-acid chain: Probable acid stress chaperone HdeA (114 aa).

The N-terminal stretch at 1 to 26 (MIKALFNKNTALAAVTILALSGGAMA) is a signal peptide. Cys-46 and Cys-94 are joined by a disulfide.

It belongs to the HdeA family.

The protein resides in the periplasm. Required for optimal acid stress protection. Exhibits a chaperone-like activity only at low pH by suppressing non-specifically the aggregation of denaturated periplasmic proteins. This is Probable acid stress chaperone HdeA from Brucella suis biovar 1 (strain 1330).